The sequence spans 474 residues: tRNA-2-methylthio-N(6)-dimethylallyladenosine synthase (474 aa).

The 118-residue stretch at 3 to 120 folds into the MTTase N-terminal domain; the sequence is KKLHIKTWGC…LPEMINHVQG (118 aa). 6 residues coordinate [4Fe-4S] cluster: cysteine 12, cysteine 49, cysteine 83, cysteine 157, cysteine 161, and cysteine 164. The Radical SAM core domain occupies 143 to 375; that stretch reads RADGPTAFVS…QDRITKQAMR (233 aa). Residues 378-441 form the TRAM domain; sequence RLMLGTVQRI…TNSLRGIVVR (64 aa).

Belongs to the methylthiotransferase family. MiaB subfamily. Monomer. [4Fe-4S] cluster serves as cofactor.

It localises to the cytoplasm. The enzyme catalyses N(6)-dimethylallyladenosine(37) in tRNA + (sulfur carrier)-SH + AH2 + 2 S-adenosyl-L-methionine = 2-methylsulfanyl-N(6)-dimethylallyladenosine(37) in tRNA + (sulfur carrier)-H + 5'-deoxyadenosine + L-methionine + A + S-adenosyl-L-homocysteine + 2 H(+). In terms of biological role, catalyzes the methylthiolation of N6-(dimethylallyl)adenosine (i(6)A), leading to the formation of 2-methylthio-N6-(dimethylallyl)adenosine (ms(2)i(6)A) at position 37 in tRNAs that read codons beginning with uridine. The sequence is that of tRNA-2-methylthio-N(6)-dimethylallyladenosine synthase from Pectobacterium atrosepticum (strain SCRI 1043 / ATCC BAA-672) (Erwinia carotovora subsp. atroseptica).